The primary structure comprises 542 residues: Chaperonin GroEL 4 (542 aa).

ATP contacts are provided by residues Thr30–Pro33, Lys51, Asp87–Thr91, Gly415, and Asp496.

The protein belongs to the chaperonin (HSP60) family. Forms a cylinder of 14 subunits composed of two heptameric rings stacked back-to-back. Interacts with the co-chaperonin GroES.

Its subcellular location is the cytoplasm. It carries out the reaction ATP + H2O + a folded polypeptide = ADP + phosphate + an unfolded polypeptide.. Together with its co-chaperonin GroES, plays an essential role in assisting protein folding. The GroEL-GroES system forms a nano-cage that allows encapsulation of the non-native substrate proteins and provides a physical environment optimized to promote and accelerate protein folding. The chain is Chaperonin GroEL 4 from Rhizobium etli (strain ATCC 51251 / DSM 11541 / JCM 21823 / NBRC 15573 / CFN 42).